Here is a 122-residue protein sequence, read N- to C-terminus: Prefoldin subunit 1 (122 aa).

The protein belongs to the prefoldin subunit beta family. In terms of assembly, heterohexamer of two PFD-alpha type and four PFD-beta type subunits.

In terms of biological role, binds specifically to cytosolic chaperonin (c-CPN) and transfers target proteins to it. Binds to nascent polypeptide chain and promotes folding in an environment in which there are many competing pathways for nonnative proteins. The protein is Prefoldin subunit 1 (pfdn1) of Tetraodon nigroviridis (Spotted green pufferfish).